Reading from the N-terminus, the 167-residue chain is Small ribosomal subunit protein uS9 (167 aa).

Disordered stretches follow at residues 1–45 and 137–167; these read MSEY…GGAT and KAGFLTRDPRATERKKAGLKKARKAPQFSKR. Residues 9-19 are compositionally biased toward acidic residues; that stretch reads DTVEDITESDE. A compositionally biased stretch (polar residues) spans 20–36; that stretch reads FTGTYTSESSTPATGGN. A compositionally biased stretch (basic and acidic residues) spans 143-152; that stretch reads RDPRATERKK. Basic residues predominate over residues 153–167; that stretch reads AGLKKARKAPQFSKR.

The protein belongs to the universal ribosomal protein uS9 family.

In Kineococcus radiotolerans (strain ATCC BAA-149 / DSM 14245 / SRS30216), this protein is Small ribosomal subunit protein uS9.